The sequence spans 538 residues: Protein NRT1/ PTR FAMILY 5.11 (538 aa).

The next 2 membrane-spanning stretches (helical) occupy residues Phe-44 to Ser-64 and Ala-74 to Leu-94. At Thr-99 the chain carries Phosphothreonine. The next 10 helical transmembrane spans lie at Ile-100 to Ile-120, Thr-134 to Ile-154, Ser-175 to Val-194, Trp-204 to Leu-224, Ile-308 to Phe-328, Gly-342 to Ile-362, Ile-389 to Lys-409, Val-424 to Gly-444, Ala-463 to Ile-483, and Tyr-507 to Ala-527.

Belongs to the major facilitator superfamily. Proton-dependent oligopeptide transporter (POT/PTR) (TC 2.A.17) family. Expressed in shoots and roots.

It is found in the membrane. The sequence is that of Protein NRT1/ PTR FAMILY 5.11 (NPF5.11) from Arabidopsis thaliana (Mouse-ear cress).